The sequence spans 757 residues: Polyribonucleotide nucleotidyltransferase (757 aa).

Residues aspartate 531 and aspartate 537 each coordinate Mg(2+). The KH domain occupies 597–656 (PRVTTIRVPVDKIGEVIGPKGKIINAITEETGAQISIEDDGTVFVGATDGPSAQAAIDRI). Residues 668-737 (GERFLGTVVK…KRGKISLVLV (70 aa)) enclose the S1 motif domain.

The protein belongs to the polyribonucleotide nucleotidyltransferase family. Mg(2+) serves as cofactor.

The protein localises to the cytoplasm. It carries out the reaction RNA(n+1) + phosphate = RNA(n) + a ribonucleoside 5'-diphosphate. Functionally, involved in mRNA degradation. Catalyzes the phosphorolysis of single-stranded polyribonucleotides processively in the 3'- to 5'-direction. In Mycolicibacterium paratuberculosis (strain ATCC BAA-968 / K-10) (Mycobacterium paratuberculosis), this protein is Polyribonucleotide nucleotidyltransferase.